We begin with the raw amino-acid sequence, 208 residues long: Small ribosomal subunit protein uS4 (208 aa).

Residues 98 to 161 (RRLDNVVYRL…RKSKRFKEVF (64 aa)) form the S4 RNA-binding domain.

It belongs to the universal ribosomal protein uS4 family. Part of the 30S ribosomal subunit. Contacts protein S5. The interaction surface between S4 and S5 is involved in control of translational fidelity.

In terms of biological role, one of the primary rRNA binding proteins, it binds directly to 16S rRNA where it nucleates assembly of the body of the 30S subunit. Functionally, with S5 and S12 plays an important role in translational accuracy. In Halothermothrix orenii (strain H 168 / OCM 544 / DSM 9562), this protein is Small ribosomal subunit protein uS4.